A 737-amino-acid polypeptide reads, in one-letter code: MAESELEKLRQDIAILTEKYEQAKEDIHKAANAGLELLRQKEDLEKRLAEMQAELDLARTEIDKTNQTLAEYRSQHQRSTRSELENEESLLEESSAKEEEYLQRIAKLEADLKKKEQELAEKKEELESIEKKHSKEIDSGAALEDERRKLRAELKETKEREQRLISEYSELEEENIGLQKTVANLRGSQVEYESLRIDNNRLEETIEIMKMAAEEDEILRVIADKQLEEALLTAQQERDQRLAMKRELEQTRNAEHISSLNDMLFGLERLGEDGELPPPQPGASDLFSELQGSSDVKVRELEAAKEGLQEELKSREKIFIEFVTGLADTLNIHRPTNELDYMHARQQKDVVLEKIQNIARDTDRHDKEGEEKRSGILKADLRTLVLVAGEKSAQLAAAQDAMIQVSDQLYQFYHQMTQNQGVQTEKSVQEIVKKLRLLARANAEDVPRVSLADEGVESGTETDVNASRSIPLNSDRLVIAPSFAKEIEKKLASVKIGDVLSETDLRQRILTEGNAISETTESLKKMIQVVKRTSEQAFNQAVMASGAENEIEMQNMKLRSLLSTKRDQISTLRTVLKSNKLTAESALTSMREKYESEKKMMMEINDKMRRELKQLKEDAATFASHRAMFTARGEELKSKVEELSNELRANEEEKKTLNQLLRLAIQQKLTLTQRLEEVEVDRDRQVFKRSSTRAPTRETYQPPRAVRYPGSTTTAQQPAPSSSGGSRGGPRRGDNQQ.

3 coiled-coil regions span residues 1–255, 292–319, and 547–684; these read MAES…RNAE, GSSD…EKIF, and AENE…DRDR. Positions 72–97 are disordered; that stretch reads YRSQHQRSTRSELENEESLLEESSAK. Residues 686–737 form a disordered region; the sequence is VFKRSSTRAPTRETYQPPRAVRYPGSTTTAQQPAPSSSGGSRGGPRRGDNQQ. The span at 710–719 shows a compositional bias: polar residues; it reads GSTTTAQQPA.

This sequence belongs to the BicD family. As to quaternary structure, component of a dynein-regulating complex composed of at least bicd-1, dlc-1 and egal-1. Interacts with egal-1 and unc-83. Expressed in the excretory cell, body wall muscles, vulval muscle cells, PVD and FLP sensory neurons and AVF interneurons.

It is found in the nucleus envelope. The protein localises to the perikaryon. It localises to the cell projection. The protein resides in the dendrite. Functionally, part of a complex with dlc-1 and egal-1, which is recruited to the nuclear envelope by unc-83, where in turn, it recruits dynein to the nuclear surface and regulates nuclear migration in hypodermal precursor cells. Required for the formation of dendritic branches of PVD sensory neurons. This Caenorhabditis elegans protein is Protein bicaudal D homolog.